Here is a 523-residue protein sequence, read N- to C-terminus: REST corepressor 2 (523 aa).

A disordered region spans residues 1-43 (MPSVMEKPSAGSGILSRSRAKTAPNGGQPHSEDDSSEEEHSHD). Positions 30 to 43 (HSEDDSSEEEHSHD) are enriched in basic and acidic residues. A phosphoserine mark is found at S31, S35, S36, and S63. In terms of domain architecture, ELM2 spans 44–129 (SMIRVGTNYQ…KSLADLANFT (86 aa)). K88 is covalently cross-linked (Glycyl lysine isopeptide (Lys-Gly) (interchain with G-Cter in SUMO2)). Positions 130 to 181 (PFPDEWTVEDKVLFEQAFGFHGKCFQRIQQMLPDKVIPSLVKYYYSWKKTRS) constitute an SANT 1 domain. The disordered stretch occupies residues 185 to 244 (VMDRQARRLGGRKDKEDSDELEEGRGAVSEGEPDTGDPKREPLPSRPLNARPGPGKKEVQ). S202 carries the phosphoserine modification. A coiled-coil region spans residues 283-314 (TLRGLDSQLISLKRQVQSMKQTNSSLRQALEG). Residues 327–378 (KFNSRWTTDEQLLAVQAIRRYGKDFGAIAEVIGNKTLTQVKTFFVSYRRRFN) enclose the SANT 2 domain. The disordered stretch occupies residues 387–523 (EAEQDGAPAA…APLEPPAPSL (137 aa)). The span at 432-459 (SVPPAPPPPPPPTSLSQPPPLLRPPLPT) shows a compositional bias: pro residues. Low complexity predominate over residues 460–482 (APTLLRQPPPLQQGRFLQPRLAP). R479 is subject to Asymmetric dimethylarginine. Residues 504–523 (GPQPPPTLVGAPLEPPAPSL) show a composition bias toward pro residues.

This sequence belongs to the CoREST family. As to expression, predominantly, but not exclusively, expressed in neural tissue. Strongly expressed in neural domains of the developing brain of the developing mouse CNS.

The protein localises to the nucleus. May act as a component of a corepressor complex that represses transcription. The protein is REST corepressor 2 (Rcor2) of Mus musculus (Mouse).